A 307-amino-acid polypeptide reads, in one-letter code: Protein YIF1A (307 aa).

A disordered region spans residues 1–42 (MNFQQQGYRATKPRARASPPTGGPMLFDDTSSGPPPMNNQNY). Over 1-148 (MNFQQQGYRA…TPRHDVNAPD (148 aa)) the chain is Cytoplasmic. A helical transmembrane segment spans residues 149-169 (LYIPTMAFITYILLAGMALGI). The Lumenal segment spans residues 170–184 (QKRFSPEVLGLCAST). The helical transmembrane segment at 185-205 (ALVWMIIEVLVMLLSLYLLTV) threads the bilayer. At 206 to 213 (HTDLSTFD) the chain is on the cytoplasmic side. The chain crosses the membrane as a helical span at residues 214-236 (LVAYSGYKYVGMILTVFCGLLFG). Topologically, residues 237-239 (SDG) are lumenal. The chain crosses the membrane as a helical span at residues 240-259 (YYVALAWSSCALMFFIVRSL). Residues 260 to 285 (KMKILSSISADSMGAGASAKPRFRLY) are Cytoplasmic-facing. Residues 286–306 (ITVASAAFQPFIIYWLTAHLV) form a helical membrane-spanning segment.

The protein belongs to the YIF1 family.

The protein localises to the endoplasmic reticulum membrane. Its subcellular location is the golgi apparatus membrane. It localises to the endoplasmic reticulum-Golgi intermediate compartment membrane. In terms of biological role, possible role in transport between endoplasmic reticulum and Golgi. This is Protein YIF1A (yif1a) from Danio rerio (Zebrafish).